Reading from the N-terminus, the 343-residue chain is Ubiquitin thioesterase OTU1 (343 aa).

Positions Arg-45–Lys-123 are UBX-like. The 126-residue stretch at Leu-144–Asn-269 folds into the OTU domain. The cys-loop stretch occupies residues Val-149–Cys-155. The active site involves Asp-152. Cys-155 serves as the catalytic Nucleophile. Positions Ile-208–Ile-218 are variable-loop. The tract at residues Tyr-258 to His-262 is his-loop. Residue Ile-261 participates in substrate binding. The active site involves His-262. An S2 site region spans residues Asp-286–Gln-291. The C2H2-type zinc-finger motif lies at Leu-313–His-337. His-337 is a catalytic residue.

As to quaternary structure, interacts with VCP; the interaction is direct. Interacts with FAF2/UBXD8. Interacts with DERL1; however interaction is dependent on the UBAX-like region, suggesting that it may be indirect. Interacts with PLAA, UBXN6 and VCP; may form a complex involved in macroautophagy.

Its subcellular location is the cytoplasm. It catalyses the reaction Thiol-dependent hydrolysis of ester, thioester, amide, peptide and isopeptide bonds formed by the C-terminal Gly of ubiquitin (a 76-residue protein attached to proteins as an intracellular targeting signal).. In terms of biological role, hydrolase that can remove conjugated ubiquitin from proteins and participates in endoplasmic reticulum-associated degradation (ERAD) for misfolded lumenal proteins. May act by triming the ubiquitin chain on the associated substrate to facilitate their threading through the VCP/p97 pore. Ubiquitin moieties on substrates may present a steric impediment to the threading process when the substrate is transferred to the VCP pore and threaded through VCP's axial channel. Mediates deubiquitination of 'Lys-27'-, 'Lys-29'- and 'Lys-33'-linked polyubiquitin chains. Also able to hydrolyze 'Lys-11'-linked ubiquitin chains. Cleaves both polyubiquitin and di-ubiquitin. May play a role in macroautophagy, regulating for instance the clearance of damaged lysosomes. May recruit PLAA, UBXN6 and VCP to damaged lysosome membranes decorated with K48-linked ubiquitin chains and remove these chains allowing autophagosome formation. The sequence is that of Ubiquitin thioesterase OTU1 (Yod1) from Mus musculus (Mouse).